Reading from the N-terminus, the 807-residue chain is Spondin-1 (807 aa).

The first 28 residues, 1–28, serve as a signal peptide directing secretion; the sequence is MRLSPVLLRLSRGPALLALALPLAVALA. A Reelin domain is found at 29-194; sequence FSDETLDKVP…DSTFDGVTDK (166 aa). 17 disulfides stabilise this stretch: Cys44/Cys128, Cys156/Cys182, Cys199/Cys336, Cys200/Cys340, Cys202/Cys415, Cys443/Cys480, Cys454/Cys489, Cys459/Cys494, Cys502/Cys538, Cys513/Cys517, Cys548/Cys554, Cys559/Cys595, Cys570/Cys574, Cys605/Cys610, Cys615/Cys650, Cys626/Cys630, and Cys660/Cys665. The 194-residue stretch at 195 to 388 folds into the Spondin domain; it reads PILDCCACGT…LTSLDHPQSP (194 aa). N-linked (GlcNAc...) asparagine glycosylation is present at Asn214. The Ca(2+) site is built by Asp325, Asp354, and Asp358. TSP type-1 domains are found at residues 442-495, 501-555, 558-611, 614-666, 668-721, and 754-806; these read TCIY…PGCS, TCTM…EECS, SCLT…PECH, PCLL…PECP, DCEL…RKCL, and GCRM…NVHP. An N-linked (GlcNAc...) asparagine glycan is attached at Asn681.

In terms of assembly, binds to the central extracellular domain of APP and inhibits beta-secretase cleavage of APP.

It localises to the secreted. It is found in the extracellular space. The protein resides in the extracellular matrix. Functionally, cell adhesion protein that promotes the attachment of spinal cord and sensory neuron cells and the outgrowth of neurites in vitro. May contribute to the growth and guidance of axons in both the spinal cord and the PNS. Major factor for vascular smooth muscle cell. The sequence is that of Spondin-1 (SPON1) from Bos taurus (Bovine).